Consider the following 367-residue polypeptide: Protein valois (367 aa).

3 WD repeats span residues 101 to 139, 152 to 192, and 198 to 238; these read QAEH…RDSQ, AHPT…MVST, and SHTD…PSST. An interaction with csul region spans residues 309–367; sequence LAAMSNLPASVKVANVQAGHEFIYTHQDTHSRLTDAVWTDDSTLITIGHGRKMVTHAIK.

In terms of assembly, interacts with csul and tud. In terms of tissue distribution, in oocytes, localizes to pole plasm and nuage (at protein level). Expressed stronger in the germline than in somatic cells. In the germarium it sometimes concentrates in perinuclear aggregates that disappear by stage 2 of oogenesis. At later stages, it is uniformly distributed in the nurse cells and oocyte, as well as in young embryos, with no particular enrichment at the posterior or inside the pole cells (at protein level).

It localises to the cytoplasm. Its function is as follows. Involved in specific localization of cytoplasmic proteins during the formation of pole plasm. Required for synthesis and/or stability of oskar protein (osk) and localization of tudor (tud) in both the nuage and posterior pole of the oocyte. Required for normal posterior localization of osk in later stages of oogenesis and for posterior localization of the vasa (vas) protein during the entire process of pole plasm assembly. May act by regulating the complex that contains the arginine N-methyltransferase csul. This is Protein valois (vls) from Drosophila melanogaster (Fruit fly).